A 741-amino-acid chain; its full sequence is 2-5A-dependent ribonuclease (741 aa).

Positions 1-21 (MESRDHNNPQEGPTSSSGRRA) are disordered. Over residues 9–18 (PQEGPTSSSG) the composition is skewed to polar residues. ANK repeat units lie at residues 24-53 (EDNHLLIKAVQNEDVDLVQQLLEGGANVNF), 58-87 (GGWTPLHNAVQMSREDIVELLLRHGADPVL), 91-120 (NGATPFILAAIAGSVKLLKLFLSKGADVNE), 124-153 (YGFTAFMEAAVYGKVKALKFLYKRGANVNL), 167-197 (GGATALMDAAEKGHVEVLKILLDEMGADVNA), 201-234 (MGRNALIHALLSSDDSDVEAITHLLLDHGADVNV), 238-268 (RGKTPLILAVEKKHLGLVQRLLEQEHIEIND), 272-301 (DGKTALLLAVELKLKKIAELLCKRGASTDC), and 303-329 (DLVMTARRNYDHSLVKVLLSHGAKEDF). 2 2-5A binding (P-loop) regions span residues 229–242 (GADVNVRGERGKTP) and 253–275 (GLVQRLLEQEHIEINDTDSDGKT). In terms of domain architecture, Protein kinase spans 365-586 (IDEKYKIADT…LSDLLGHPFF (222 aa)). The C6-type; atypical zinc-finger motif lies at 395-444 (CEGSPRAQREVSCLQSSRENSHLVTFYGSESHRGHLFVCVTLCEQTLEAC). The KEN domain maps to 589 to 723 (WESRYRTLRN…KHFPQTHSPN (135 aa)). Lysine 684 carries the N6-acetyllysine modification. The interval 715–741 (HFPQTHSPNKPQCDGAGGASGLASPGC) is disordered.

Belongs to the protein kinase superfamily. As to quaternary structure, monomer (inactive form) or homodimer. Interacts with ABCE1; this interaction inhibits the RNASEL. It depends on Mn(2+) as a cofactor. Mg(2+) serves as cofactor. In terms of tissue distribution, highly expressed in spleen and thymus followed by prostate, testis, uterus, small intestine, colon and peripheral blood leukocytes.

It localises to the cytoplasm. The protein resides in the mitochondrion. After binding to 2-5A (5'-phosphorylated 2',5'-linked oligoadenylates) the homodimerization and subsequent activation occurs. Inhibited by RNASEL inhibitor ABCE1/RLI, a cytoplasmic member of the ATP-binding cassette (ABC) transporter family. Its function is as follows. Endoribonuclease that functions in the interferon (IFN) antiviral response. In INF treated and virus infected cells, RNASEL probably mediates its antiviral effects through a combination of direct cleavage of single-stranded viral RNAs, inhibition of protein synthesis through the degradation of rRNA, induction of apoptosis, and induction of other antiviral genes. RNASEL mediated apoptosis is the result of a JNK-dependent stress-response pathway leading to cytochrome c release from mitochondria and caspase-dependent apoptosis. Therefore, activation of RNASEL could lead to elimination of virus infected cells under some circumstances. In the crosstalk between autophagy and apoptosis proposed to induce autophagy as an early stress response to small double-stranded RNA and at later stages of prolonged stress to activate caspase-dependent proteolytic cleavage of BECN1 to terminate autophagy and promote apoptosis. Might play a central role in the regulation of mRNA turnover. Cleaves 3' of UpNp dimers, with preference for UU and UA sequences, to sets of discrete products ranging from between 4 and 22 nucleotides in length. This chain is 2-5A-dependent ribonuclease (RNASEL), found in Homo sapiens (Human).